Here is a 363-residue protein sequence, read N- to C-terminus: Small ribosomal subunit biogenesis GTPase RsgA (363 aa).

In terms of domain architecture, CP-type G spans 112–268; that stretch reads HQQVIAANID…LIDTPGMREL (157 aa). GTP contacts are provided by residues 157–160 and 210–218; these read TKAD and GSSGAGKST. Zn(2+) contacts are provided by Cys-291, Cys-296, His-298, and Cys-304. A disordered region spans residues 340–363; the sequence is RVAQNNRGKGSGKRPASVDRPGRR.

Belongs to the TRAFAC class YlqF/YawG GTPase family. RsgA subfamily. Monomer. Associates with 30S ribosomal subunit, binds 16S rRNA. The cofactor is Zn(2+).

The protein localises to the cytoplasm. Functionally, one of several proteins that assist in the late maturation steps of the functional core of the 30S ribosomal subunit. Helps release RbfA from mature subunits. May play a role in the assembly of ribosomal proteins into the subunit. Circularly permuted GTPase that catalyzes slow GTP hydrolysis, GTPase activity is stimulated by the 30S ribosomal subunit. This is Small ribosomal subunit biogenesis GTPase RsgA from Xanthomonas campestris pv. campestris (strain 8004).